Here is a 367-residue protein sequence, read N- to C-terminus: UDP-N-acetylglucosamine--N-acetylmuramyl-(pentapeptide) pyrophosphoryl-undecaprenol N-acetylglucosamine transferase (367 aa).

UDP-N-acetyl-alpha-D-glucosamine contacts are provided by residues 18-20, asparagine 130, arginine 170, serine 196, isoleucine 252, 271-276, and glutamine 297; these read TGG and ALTVSE.

It belongs to the glycosyltransferase 28 family. MurG subfamily.

It localises to the cell inner membrane. The catalysed reaction is di-trans,octa-cis-undecaprenyl diphospho-N-acetyl-alpha-D-muramoyl-L-alanyl-D-glutamyl-meso-2,6-diaminopimeloyl-D-alanyl-D-alanine + UDP-N-acetyl-alpha-D-glucosamine = di-trans,octa-cis-undecaprenyl diphospho-[N-acetyl-alpha-D-glucosaminyl-(1-&gt;4)]-N-acetyl-alpha-D-muramoyl-L-alanyl-D-glutamyl-meso-2,6-diaminopimeloyl-D-alanyl-D-alanine + UDP + H(+). Its pathway is cell wall biogenesis; peptidoglycan biosynthesis. Cell wall formation. Catalyzes the transfer of a GlcNAc subunit on undecaprenyl-pyrophosphoryl-MurNAc-pentapeptide (lipid intermediate I) to form undecaprenyl-pyrophosphoryl-MurNAc-(pentapeptide)GlcNAc (lipid intermediate II). This is UDP-N-acetylglucosamine--N-acetylmuramyl-(pentapeptide) pyrophosphoryl-undecaprenol N-acetylglucosamine transferase from Shewanella frigidimarina (strain NCIMB 400).